The following is a 222-amino-acid chain: Putative thymidylate synthase (222 aa).

Residue Cys-146 is part of the active site.

This sequence belongs to the thymidylate synthase family. Archaeal-type ThyA subfamily. As to quaternary structure, monomer.

It is found in the cytoplasm. Its pathway is pyrimidine metabolism; dTTP biosynthesis. May catalyze the biosynthesis of dTMP using an unknown cosubstrate. This Methanothermobacter thermautotrophicus (strain ATCC 29096 / DSM 1053 / JCM 10044 / NBRC 100330 / Delta H) (Methanobacterium thermoautotrophicum) protein is Putative thymidylate synthase.